Reading from the N-terminus, the 332-residue chain is Homeobox protein SIX3 (332 aa).

Residues A72–P119 form an interaction with TLE5 region. Positions G206–A265 form a DNA-binding region, homeobox. Positions N232 to S234 are bind to RHO promoter. 2 disordered regions span residues N232 to G251 and R258 to V332. Residues S293 to S309 are compositionally biased toward low complexity. The span at T316 to V332 shows a compositional bias: polar residues.

Belongs to the SIX/Sine oculis homeobox family. As to quaternary structure, interacts with EYA4; translocates EYA4 from the cytoplasm to the nucleus and promotes activation of their target genes. Interacts with MTA1 and HDAC2; represses its own transcription. Interacts with MTA1; facilitates the binding of SIX3 to the core DNA motif of SIX3 promoter. Interacts with EYA1; promotes EYA1 translocation to the nucleus. Interacts with TLE1 and TLE5 (via Q domain); can act in combination with either TLE1 and/or TLE5 leading to transcriptional repression or activation, respectively. Interacts (via homeobox) with NR4A3; differentially regulates the transcriptional activities NR4A3. Interacts with GMNN. Interacts with TLE4.

It is found in the nucleus. In terms of biological role, transcriptional regulator which can act as both a transcriptional repressor and activator by binding a ATTA homeodomain core recognition sequence on these target genes. During forebrain development represses WNT1 expression allowing zona limitans intrathalamica formation and thereby ensuring proper anterio-posterior patterning of the diencephalon and formation of the rostral diencephalon. Acts as a direct upstream activator of SHH expression in the rostral diencephalon ventral midline and that in turn SHH maintains its expression. In addition, Six3 activity is required for the formation of the telencephalon. During postnatal stages of brain development is necessary for ependymal cell maturation by promoting the maturation of radial glia into ependymal cells through regulation of neuroblast proliferation and migration. Acts on the proliferation and differentiation of neural progenitor cells through activating transcription of CCND1 and CCND2. During early lens formation plays a role in lens induction and specification by activating directly PAX6 in the presumptive lens ectoderm. In turn PAX6 activates SIX3 resulting in activation of PDGFRA and CCND1 promoting cell proliferation. Also is required for the neuroretina development by directly suppressing WNT8B expression in the anterior neural plate territory. Its action during retina development and lens morphogenesis is TLE5 and TLE4-dependent manner. Furthermore, during eye development regulates several genes expression. Before and during early lens development represses the CRYGF promoter by binding a SIX repressor element. Directly activates RHO transcription, or cooperates with CRX or NRL. Six3 also functions in the formation of the proximodistal axis of the optic cup, and promotes the formation of optic vesicles-like structures. During pituitary development, acts in parallel or alternatively with HESX1 to control cell proliferation through Wnt/beta-catenin pathway. Plays a role in eye development by suppressing WNT1 expression and in dorsal-ventral patterning by repressing BMP signaling pathway. In Homo sapiens (Human), this protein is Homeobox protein SIX3 (SIX3).